The primary structure comprises 472 residues: Meiotic spindle formation protein mei-1 (472 aa).

The interval 83-161 is disordered; that stretch reads HEAMTRQSGS…TQGILPQNSA (79 aa). Ser-92 bears the Phosphoserine; by mbk-2 mark. Polar residues-rich tracts occupy residues 134 to 143 and 150 to 161; these read KSTSSMSTNP and NPTQGILPQNSA. ATP-binding positions include 233–240 and 351–352; these read GPPGTGKT and RR.

This sequence belongs to the AAA ATPase family. Katanin p60 subunit A1 subfamily. In terms of assembly, homohexamer; ATP hydrolysis initiates a cycle between an open spiral and a closed ring conformation which is probably involved in pulling tubulin dimers out from microtubules. Interacts with mei-2, which may serve as a targeting subunit. Interacts with mel-26, which targets mei-1 for ubiquitin mediated proteolysis. Interacts with phosphatase pph-4.1. Phosphorylated. Phosphorylation by mbk-2 is required for its rapid degradation following meiosis II. Likely dephosphorylated by the PP4 complex composed of catalytic subunit pph-4.1 and regulatory subunit ppfr-1. In terms of processing, polyubiquitination targets the protein for rapid degradation via the ubiquitin system at the end of meiosis. The BTB domain protein mel-26 may serve to specifically target mei-1 for ubiquitination by cul-3 containing complexes. The cul-3 protein is in turn regulated by neddylation by ned-8.

It is found in the cytoplasm. The protein resides in the cytoskeleton. Its subcellular location is the spindle pole. The protein localises to the chromosome. It carries out the reaction n ATP + n H2O + a microtubule = n ADP + n phosphate + (n+1) alpha/beta tubulin heterodimers.. Its activity is regulated as follows. ATPase activity is stimulated by microtubules, which promote homooligomerization. ATP-dependent microtubule severing is stimulated by interaction with mei-2. In terms of biological role, catalytic subunit of a complex which severs microtubules in an ATP-dependent manner. Microtubule severing may promote rapid reorganization of cellular microtubule arrays. Required specifically for meiotic spindle formation in the female germline; the presence of this protein is inimical to the formation of mitotic spindles. In body wall muscles, regulates organization of myosin thick filaments. This is Meiotic spindle formation protein mei-1 from Caenorhabditis elegans.